The sequence spans 354 residues: Methylthioribose-1-phosphate isomerase (354 aa).

Substrate contacts are provided by residues R54–A56, R97, and Q204. The active-site Proton donor is D245. Position 255–256 (N255–K256) interacts with substrate.

It belongs to the eIF-2B alpha/beta/delta subunits family. MtnA subfamily.

The catalysed reaction is 5-(methylsulfanyl)-alpha-D-ribose 1-phosphate = 5-(methylsulfanyl)-D-ribulose 1-phosphate. Its pathway is amino-acid biosynthesis; L-methionine biosynthesis via salvage pathway; L-methionine from S-methyl-5-thio-alpha-D-ribose 1-phosphate: step 1/6. Functionally, catalyzes the interconversion of methylthioribose-1-phosphate (MTR-1-P) into methylthioribulose-1-phosphate (MTRu-1-P). The polypeptide is Methylthioribose-1-phosphate isomerase (Albidiferax ferrireducens (strain ATCC BAA-621 / DSM 15236 / T118) (Rhodoferax ferrireducens)).